The chain runs to 26 residues: Hemocyanin subunit 3 (26 aa).

It belongs to the tyrosinase family. Hemocyanin subfamily. Hemolymph.

It is found in the secreted. The protein resides in the extracellular space. Hemocyanins are copper-containing oxygen carriers occurring freely dissolved in the hemolymph of many mollusks and arthropods. The polypeptide is Hemocyanin subunit 3 (Homarus americanus (American lobster)).